The following is a 243-amino-acid chain: Large ribosomal subunit protein uL3 (243 aa).

2 disordered regions span residues valine 139–glycine 164 and lysine 218–alanine 243. Glutamine 151 carries the post-translational modification N5-methylglutamine. Positions lysine 218–aspartate 229 are enriched in basic and acidic residues. Positions lysine 230–alanine 243 are enriched in low complexity.

This sequence belongs to the universal ribosomal protein uL3 family. In terms of assembly, part of the 50S ribosomal subunit. Forms a cluster with proteins L14 and L19. In terms of processing, methylated by PrmB.

In terms of biological role, one of the primary rRNA binding proteins, it binds directly near the 3'-end of the 23S rRNA, where it nucleates assembly of the 50S subunit. The chain is Large ribosomal subunit protein uL3 from Afipia carboxidovorans (strain ATCC 49405 / DSM 1227 / KCTC 32145 / OM5) (Oligotropha carboxidovorans).